The chain runs to 323 residues: Elongation factor P--(R)-beta-lysine ligase (323 aa).

Ser76–Glu78 is a substrate binding site. Residues Arg100–Glu102 and Asn109 each bind ATP. Position 118 (Tyr118) interacts with substrate. Glu242–Leu243 contacts ATP. A substrate-binding site is contributed by Glu249. Gly298 is an ATP binding site.

The protein belongs to the class-II aminoacyl-tRNA synthetase family. EpmA subfamily. In terms of assembly, homodimer.

The catalysed reaction is D-beta-lysine + L-lysyl-[protein] + ATP = N(6)-((3R)-3,6-diaminohexanoyl)-L-lysyl-[protein] + AMP + diphosphate + H(+). Its function is as follows. With EpmB is involved in the beta-lysylation step of the post-translational modification of translation elongation factor P (EF-P). Catalyzes the ATP-dependent activation of (R)-beta-lysine produced by EpmB, forming a lysyl-adenylate, from which the beta-lysyl moiety is then transferred to the epsilon-amino group of a conserved specific lysine residue in EF-P. The protein is Elongation factor P--(R)-beta-lysine ligase of Histophilus somni (strain 129Pt) (Haemophilus somnus).